We begin with the raw amino-acid sequence, 275 residues long: Acetyl-coenzyme A carboxylase carboxyl transferase subunit beta (275 aa).

One can recognise a CoA carboxyltransferase N-terminal domain in the interval 21–275; that stretch reads GLWIKCQCGA…IKIIGMHQAG (255 aa). Positions 26, 28, 44, and 47 each coordinate Zn(2+). The segment at 26–47 adopts a C4-type zinc-finger fold; it reads CQCGAILFAKDLERNLKVCQKC.

It belongs to the AccD/PCCB family. In terms of assembly, acetyl-CoA carboxylase is a heterohexamer composed of biotin carboxyl carrier protein (AccB), biotin carboxylase (AccC) and two subunits each of ACCase subunit alpha (AccA) and ACCase subunit beta (AccD). Zn(2+) is required as a cofactor.

It is found in the cytoplasm. The enzyme catalyses N(6)-carboxybiotinyl-L-lysyl-[protein] + acetyl-CoA = N(6)-biotinyl-L-lysyl-[protein] + malonyl-CoA. It functions in the pathway lipid metabolism; malonyl-CoA biosynthesis; malonyl-CoA from acetyl-CoA: step 1/1. Its function is as follows. Component of the acetyl coenzyme A carboxylase (ACC) complex. Biotin carboxylase (BC) catalyzes the carboxylation of biotin on its carrier protein (BCCP) and then the CO(2) group is transferred by the transcarboxylase to acetyl-CoA to form malonyl-CoA. The protein is Acetyl-coenzyme A carboxylase carboxyl transferase subunit beta of Desulforudis audaxviator (strain MP104C).